Reading from the N-terminus, the 932-residue chain is Protocadherin gamma-A6 (932 aa).

An N-terminal signal peptide occupies residues 1 to 29; that stretch reads MAPPQRHPQRSEQVLLLTLLGTLWGAAAA. Cadherin domains follow at residues 30-133, 134-242, 243-347, 348-452, 453-562, and 570-682; these read QIRY…TPRF, LKEE…TPVF, TQPV…VPEV, VVTS…PPTF, PHSS…APEI, and DGST…EPSA. Residues 30–692 are Extracellular-facing; it reads QIRYSIPEEL…KPNDSDLTLY (663 aa). N-linked (GlcNAc...) asparagine glycosylation occurs at Asn-81. 2 N-linked (GlcNAc...) asparagine glycosylation sites follow: Asn-419 and Asn-545. The N-linked (GlcNAc...) asparagine glycan is linked to Asn-685. The chain crosses the membrane as a helical span at residues 693–713; sequence LVVAVAAVSCVFLAFVIVLLA. Topologically, residues 714 to 932 are cytoplasmic; that stretch reads LRLQRWHKSR…KKKSGKKEKK (219 aa). 2 disordered regions span residues 803-841 and 902-932; these read DPRQ…WPNN and ATLT…KEKK. Polar residues predominate over residues 806-841; that stretch reads QLQQAPPNTDWRFSQAQRPGTSGSQNGDDTGTWPNN. A compositionally biased stretch (basic residues) spans 922–932; it reads NKKKSGKKEKK.

Its subcellular location is the cell membrane. Functionally, potential calcium-dependent cell-adhesion protein. May be involved in the establishment and maintenance of specific neuronal connections in the brain. The protein is Protocadherin gamma-A6 (PCDHGA6) of Pan troglodytes (Chimpanzee).